Consider the following 749-residue polypeptide: MEVVPAEVNSLLPDDIMDTAITLVDEDSIEAVIVSSPIPMETELEEIVNINSTGDSTATPISTEPITVYSNHTNQVAVNTTVSKADSNTTVKPAFPSGLQKLGAQTPVTISANQIILNKVSQTSDLKLGNQTLKPDGQKLILTTLGKSGSPIVLALPHSQLPQAQKVTAQAQPGDAKLPPQQIKVVTIGGRPEVKPVIGVSALTPGSQLINTTTQPSVLQTQQLKTVQIAKKPRTPTSGPVITKLIFAKPINSKAVTGQTTQASPPVVTGRVLSQSTPGTPSKTITISESGVIGSTLNSTTQTPNKIAISPLKSPNKTVKSAVQTITVGGMSTSQFKTIIPLATAPNVQQIQVPGSKFHYVRLVTATTASSSAQPVSQSPSVNTQPLQQAKPVVVNTTPVRMSVPFVQAQAVKQVVPKPINSTSQIVTTSQPQQRLIMPATPLPQIQPNLTNLPPGTVLAPAPGTGNVGYAVLPAQYVTQLQQSSYVSIASNSNFTGTSGIQTQARLPFNGIIPSESTSRPRKPCNCTKSLCLKLYCDCFANGEFCNNCNCTNCYNNLEHENERQKAIKACLDRNPEAFKPKIGKGKEGESDRRHSKGCNCKRSGCLKNYCECYEAKIMCSSICKCIGCKNFEESPERKTLMHLADAAEVRVQQQTAAKTKLSSQISDLLTRPTPALNSAGGKLPFTFVTKEVAEATCNCLLAQAEQADKKGKSKAAAERMILEEFGRCLMSVINSAGKAKSDPCAMHC.

K139 participates in a covalent cross-link: Glycyl lysine isopeptide (Lys-Gly) (interchain with G-Cter in SUMO2). N6-acetyllysine is present on residues K244 and K249. 4 positions are modified to phosphoserine: S264, S282, S310, and S314. K357 is covalently cross-linked (Glycyl lysine isopeptide (Lys-Gly) (interchain with G-Cter in SUMO2)). Residues 521–634 (PRKPCNCTKS…KCIGCKNFEE (114 aa)) enclose the CRC domain. The segment at 523-536 (KPCNCTKSLCLKLY) is DNA-binding. Residues C525, C527, C532, C537, C539, C546, C549, C551, and C554 each coordinate Zn(2+). Positions 583–596 (IGKGKEGESDRRHS) are linker. Positions 599, 601, 606, 611, 613, 620, 624, 626, and 629 each coordinate Zn(2+). Positions 599 to 612 (CNCKRSGCLKNYCE) are DNA-binding. Residue S635 is modified to Phosphoserine. Glycyl lysine isopeptide (Lys-Gly) (interchain with G-Cter in SUMO2) cross-links involve residues K639, K659, and K661.

This sequence belongs to the lin-54 family. In terms of assembly, component of the DREAM complex (also named LINC complex) at least composed of E2F4, E2F5, LIN9, LIN37, LIN52, LIN54, MYBL1, MYBL2, RBL1, RBL2, RBBP4, RBL2, TFDP1 and TFDP2. The complex exists in quiescent cells where it represses cell cycle-dependent genes. It dissociates in S phase when LIN9, LIN37, LIN52 and LIN54 form a subcomplex that binds to MYBL2.

It is found in the nucleus. Functionally, component of the DREAM complex, a multiprotein complex that can both act as a transcription activator or repressor depending on the context. In G0 phase, the complex binds to more than 800 promoters and is required for repression of E2F target genes. In S phase, the complex selectively binds to the promoters of G2/M genes whose products are required for mitosis and participates in their cell cycle dependent activation. In the complex, acts as a DNA-binding protein that binds the promoter of CDK1 in a sequence-specific manner. Specifically recognizes the consensus motif 5'-TTYRAA-3' in target DNA. This Mus musculus (Mouse) protein is Protein lin-54 homolog (Lin54).